A 288-amino-acid polypeptide reads, in one-letter code: Protein sprouty homolog 3 (288 aa).

In terms of domain architecture, SPR spans 154–260 (KCVPCTAARP…GYDSLRRPGC (107 aa)).

It belongs to the sprouty family. Interacts with TESK1. Interacts with USP11. Interacts with CAV1 (via C-terminus). As to expression, widely expressed; particularly in the fetal tissues. Expressed in the brain with expression the highest in Purkinje cells in the cerebellum (at protein level). Expressed in the myocardium of the heart.

Its subcellular location is the cytoplasm. Inhibits neurite branching, arbor length and neurite complexity. Inhibits EGF-mediated p42/44 ERK signaling. Negatively regulates the MAPK cascade, resulting in a reduction of extracellular matrix protein accumulation. May function as an antagonist of fibroblast growth factor (FGF) pathways and may negatively modulate respiratory organogenesis. The sequence is that of Protein sprouty homolog 3 from Homo sapiens (Human).